We begin with the raw amino-acid sequence, 239 residues long: MQSRLAWSKGNWTGLVGSLISLTSSSTSHALVGNNSILICGKIKIILNIEMVDTGRIFVITGPSGVGKSSLVRCLIDHFKDKLRYSISATTRKMRNSETEGVDYFFKDKAEFEKLIAADAFVEWAMYNDNYYGTLKSQAEQIIHNGGNLVLEIEYQGALQVKQKYPNDVVLIFIKPPSMEELLVRLKKRNDEDAITIQNRLKQAEKECQQIGHFKYVVTNNEFDKTLAELQAILLAEFN.

The Guanylate kinase-like domain occupies 55–235; it reads GRIFVITGPS…TLAELQAILL (181 aa). 62 to 69 contacts ATP; it reads GPSGVGKS.

This sequence belongs to the guanylate kinase family.

It is found in the cytoplasm. It carries out the reaction GMP + ATP = GDP + ADP. Functionally, essential for recycling GMP and indirectly, cGMP. In Mycoplasma pneumoniae (strain ATCC 29342 / M129 / Subtype 1) (Mycoplasmoides pneumoniae), this protein is Guanylate kinase (gmk).